Consider the following 1401-residue polypeptide: Protein dispatched homolog 2 (1401 aa).

Disordered stretches follow at residues 1 to 91 (MDGD…LAPA) and 113 to 138 (DRAALCSHGSSLSPSPAPSQRDGTWK). The helical transmembrane segment at 170-190 (VAVLMLCLAVIFLCTLAGLLG) threads the bilayer. The N-linked (GlcNAc...) asparagine glycan is linked to asparagine 239. Residues 241 to 264 (SSSHNTLRPAPRGSAQESAVRPRR) form a disordered region. N-linked (GlcNAc...) asparagine glycosylation is found at asparagine 349 and asparagine 465. In terms of domain architecture, SSD spans 471–643 (GMDLGLKQEL…LVWLPASAVL (173 aa)). 11 helical membrane-spanning segments follow: residues 484–504 (FLVQDTVYPLLALVAIFFGMA), 510–530 (LFLTLMVLLGVLGSLLVAFFL), 542–562 (FVNLAALLLLSSVCANHTLIF), 589–609 (FGYLLLVSGLTTSAAFYASYL), 617–637 (CLALFMGTAVLVHLALTLVWL), 704–724 (YIWICWFAALAAGGAYIAGVS), 964–984 (PAVVLGLALALAFATLLLGTW), 990–1010 (LFSVAAVAGTVLLTVGLLVLL), 1019–1039 (ALFLSASVGLSVDFTVNYCIS), 1064–1084 (AVGAAALFAAGVLMLPATVLL), and 1088–1108 (LGIILMMVKCVSCGFASFFFQ). 3 disordered regions span residues 1169–1192 (ARRRSPSFDTSTATSKLSHRPSVL), 1229–1337 (PALQ…NGKR), and 1352–1401 (SLPA…GYSS). A compositionally biased stretch (polar residues) spans 1175 to 1184 (SFDTSTATSK). The span at 1259–1270 (PLPASPEAPAHS) shows a compositional bias: low complexity. A compositionally biased stretch (polar residues) spans 1284–1305 (SSASTLEGLSVSDETCLSTSEP). Low complexity predominate over residues 1352–1362 (SLPASHHSSLS). Arginine 1366 carries the post-translational modification Omega-N-methylarginine.

The protein belongs to the dispatched family.

The protein localises to the membrane. The polypeptide is Protein dispatched homolog 2 (Homo sapiens (Human)).